We begin with the raw amino-acid sequence, 323 residues long: UPF0065 protein BP0148 (323 aa).

Positions 1–24 (MKPFSLLRRIATIALLMAASSAHA) are cleaved as a signal peptide.

Belongs to the UPF0065 (bug) family.

It is found in the periplasm. The chain is UPF0065 protein BP0148 from Bordetella pertussis (strain Tohama I / ATCC BAA-589 / NCTC 13251).